Reading from the N-terminus, the 327-residue chain is MHLFKDSLNLIVSSGNGGAGCVSFLREKFKAKGGPDGGDGGRGGDVIFKVKSNLKTLSLYRNGQKLSASNGKSGMGLKKSGAAGSDLIIFVPPNTSIYDADSNCMLFELKNFNDEVVVLKGGRGGLGNVNFKSSTKRTPRFAQPGESGLTLNLRLELSLIADVGLVGLPNAGKSSLISKITASRSKVANYPFTTKIPHFGVVRVSYNDLIIADLPGIIEGASKGIGLGFEFLRHISKTQILVFLIDVSSNDFMSAYDILINELRVYDIGLLKKKRIIVASKLDLEGATENFNQLKSILSEERVLGISIYDNIGINELVSEFFSLAKI.

The Obg domain occupies 2 to 160 (HLFKDSLNLI…LNLRLELSLI (159 aa)). Residues 161 to 326 (ADVGLVGLPN…LVSEFFSLAK (166 aa)) enclose the OBG-type G domain. GTP is bound by residues 167 to 174 (GLPNAGKS), 192 to 196 (FTTKI), 213 to 216 (DLPG), 280 to 283 (SKLD), and 307 to 309 (SIY). Positions 174 and 194 each coordinate Mg(2+).

The protein belongs to the TRAFAC class OBG-HflX-like GTPase superfamily. OBG GTPase family. In terms of assembly, monomer. Mg(2+) serves as cofactor.

The protein localises to the cytoplasm. In terms of biological role, an essential GTPase which binds GTP, GDP and possibly (p)ppGpp with moderate affinity, with high nucleotide exchange rates and a fairly low GTP hydrolysis rate. Plays a role in control of the cell cycle, stress response, ribosome biogenesis and in those bacteria that undergo differentiation, in morphogenesis control. The polypeptide is GTPase Obg (Borrelia recurrentis (strain A1)).